We begin with the raw amino-acid sequence, 227 residues long: 6-phosphogluconolactonase (227 aa).

The protein belongs to the glucosamine/galactosamine-6-phosphate isomerase family. 6-phosphogluconolactonase subfamily.

The enzyme catalyses 6-phospho-D-glucono-1,5-lactone + H2O = 6-phospho-D-gluconate + H(+). It functions in the pathway carbohydrate degradation; pentose phosphate pathway; D-ribulose 5-phosphate from D-glucose 6-phosphate (oxidative stage): step 2/3. Functionally, hydrolysis of 6-phosphogluconolactone to 6-phosphogluconate. In Helicobacter pylori (strain ATCC 700392 / 26695) (Campylobacter pylori), this protein is 6-phosphogluconolactonase (pgl).